Consider the following 203-residue polypeptide: uncharacterized protein (203 aa).

A helical transmembrane segment spans residues 9–29; sequence LVVLFTIVTFGLVSPPAALMA.

It localises to the membrane. This is an uncharacterized protein from Bacillus subtilis (strain 168).